A 445-amino-acid polypeptide reads, in one-letter code: 23S rRNA (uracil(1939)-C(5))-methyltransferase RlmD (445 aa).

Residues 1 to 21 are disordered; the sequence is MARRRKQLPETPEPASIETLS. Residues 5 to 64 enclose the TRAM domain; it reads RKQLPETPEPASIETLSHDGRGIARRDGKTTFIDNALPGEEVMFKFTYMRRKFDEGKAVE. The [4Fe-4S] cluster site is built by Cys77, Cys83, Cys86, and Cys165. S-adenosyl-L-methionine is bound by residues Gln275, Phe304, Asn309, Glu325, Asp352, and Asp373. Catalysis depends on Cys399, which acts as the Nucleophile.

The protein belongs to the class I-like SAM-binding methyltransferase superfamily. RNA M5U methyltransferase family. RlmD subfamily.

It catalyses the reaction uridine(1939) in 23S rRNA + S-adenosyl-L-methionine = 5-methyluridine(1939) in 23S rRNA + S-adenosyl-L-homocysteine + H(+). Functionally, catalyzes the formation of 5-methyl-uridine at position 1939 (m5U1939) in 23S rRNA. This is 23S rRNA (uracil(1939)-C(5))-methyltransferase RlmD from Alcanivorax borkumensis (strain ATCC 700651 / DSM 11573 / NCIMB 13689 / SK2).